Here is a 365-residue protein sequence, read N- to C-terminus: F-box protein At1g48060 (365 aa).

The tract at residues Met1–Ser20 is disordered. An F-box domain is found at Ser20–Arg69.

This Arabidopsis thaliana (Mouse-ear cress) protein is F-box protein At1g48060.